The chain runs to 912 residues: Accessory gland protein Acp36DE (912 aa).

Positions 1–23 are cleaved as a signal peptide; the sequence is MWTLTCQQFIALILLGTLVPSES. Composition is skewed to low complexity over residues 193 to 220, 230 to 255, 271 to 324, and 521 to 544; these read QSQS…QEQS, SESQ…SQRQ, KSNE…GLQQ, and QSQL…EQLQ. Disordered regions lie at residues 193–255, 271–349, 518–544, 638–671, and 732–912; these read QSQS…SQRQ, KSNE…QKQL, TQTQ…EQLQ, PSEG…SGGG, and GQQQ…NLSG. Low complexity-rich tracts occupy residues 732–757 and 765–785; these read GQQQ…SSSQ and QSTG…GLQT. The segment covering 803–818 has biased composition (basic and acidic residues); that stretch reads RLKEQEQLRIQTENDQ. The span at 821-845 shows a compositional bias: low complexity; that stretch reads SSSSSHSNSQNSQSSSSQSSQASQS. Positions 851 to 861 are enriched in polar residues; sequence EAGNRNTLLLD. Residues 862 to 897 show a composition bias toward low complexity; it reads QSSSKTQSESKSESSSQSSSHSSSQSTSNSSSNVQS. A compositionally biased stretch (polar residues) spans 898–912; that stretch reads KLQGESQALLNNLSG.

In terms of processing, proteolytically cleaved by the seminal metalloprotease Semp1. Cleavage appears to take place in the mated female. In terms of tissue distribution, detected in the male accessory glands (at protein level). Produced in the accessory glands and secreted into seminal fluid.

Its subcellular location is the secreted. Its function is as follows. Responsible for physiological and behavioral changes in mated female flies. Associates with sperm and localizes to specific regions of the female reproductive tract, including the sperm storage organs. It accelerates sperm accumulation into storage but does not mediate the entry of the first sperm into storage. Once sperm storage has initiated it seems to act as a guidance factor helping subsequent sperm move into storage, a corral concentrating sperm around the SSO entrances and/or a trigger for responses within the female that accelerate storage of sperm. In Drosophila melanogaster (Fruit fly), this protein is Accessory gland protein Acp36DE (Acp36DE).